The primary structure comprises 456 residues: Bifunctional protein GlmU (456 aa).

The tract at residues Met-1–Arg-229 is pyrophosphorylase. UDP-N-acetyl-alpha-D-glucosamine is bound by residues Leu-11–Gly-14, Lys-25, Gln-76, Gly-81–Thr-82, Tyr-103–Asp-105, Gly-140, Glu-154, Asn-169, and Asn-227. Position 105 (Asp-105) interacts with Mg(2+). Position 227 (Asn-227) interacts with Mg(2+). Positions Leu-230–Ala-250 are linker. An N-acetyltransferase region spans residues Gly-251–Lys-456. Residues Arg-333 and Lys-351 each contribute to the UDP-N-acetyl-alpha-D-glucosamine site. Catalysis depends on His-363, which acts as the Proton acceptor. Residues Tyr-366 and Asn-377 each contribute to the UDP-N-acetyl-alpha-D-glucosamine site. Residues Ala-380, Asn-386 to Tyr-387, Ser-405, Ala-423, and Arg-440 each bind acetyl-CoA.

The protein in the N-terminal section; belongs to the N-acetylglucosamine-1-phosphate uridyltransferase family. This sequence in the C-terminal section; belongs to the transferase hexapeptide repeat family. Homotrimer. It depends on Mg(2+) as a cofactor.

The protein localises to the cytoplasm. It catalyses the reaction alpha-D-glucosamine 1-phosphate + acetyl-CoA = N-acetyl-alpha-D-glucosamine 1-phosphate + CoA + H(+). The enzyme catalyses N-acetyl-alpha-D-glucosamine 1-phosphate + UTP + H(+) = UDP-N-acetyl-alpha-D-glucosamine + diphosphate. Its pathway is nucleotide-sugar biosynthesis; UDP-N-acetyl-alpha-D-glucosamine biosynthesis; N-acetyl-alpha-D-glucosamine 1-phosphate from alpha-D-glucosamine 6-phosphate (route II): step 2/2. It functions in the pathway nucleotide-sugar biosynthesis; UDP-N-acetyl-alpha-D-glucosamine biosynthesis; UDP-N-acetyl-alpha-D-glucosamine from N-acetyl-alpha-D-glucosamine 1-phosphate: step 1/1. The protein operates within bacterial outer membrane biogenesis; LPS lipid A biosynthesis. Catalyzes the last two sequential reactions in the de novo biosynthetic pathway for UDP-N-acetylglucosamine (UDP-GlcNAc). The C-terminal domain catalyzes the transfer of acetyl group from acetyl coenzyme A to glucosamine-1-phosphate (GlcN-1-P) to produce N-acetylglucosamine-1-phosphate (GlcNAc-1-P), which is converted into UDP-GlcNAc by the transfer of uridine 5-monophosphate (from uridine 5-triphosphate), a reaction catalyzed by the N-terminal domain. This is Bifunctional protein GlmU from Escherichia coli O7:K1 (strain IAI39 / ExPEC).